Consider the following 452-residue polypeptide: Exodeoxyribonuclease 7 large subunit (452 aa).

It belongs to the XseA family. As to quaternary structure, heterooligomer composed of large and small subunits.

Its subcellular location is the cytoplasm. It catalyses the reaction Exonucleolytic cleavage in either 5'- to 3'- or 3'- to 5'-direction to yield nucleoside 5'-phosphates.. Its function is as follows. Bidirectionally degrades single-stranded DNA into large acid-insoluble oligonucleotides, which are then degraded further into small acid-soluble oligonucleotides. This chain is Exodeoxyribonuclease 7 large subunit, found in Bacillus cereus (strain G9842).